The chain runs to 102 residues: Small ribosomal subunit protein uS10 (102 aa).

The protein belongs to the universal ribosomal protein uS10 family. In terms of assembly, part of the 30S ribosomal subunit.

Its function is as follows. Involved in the binding of tRNA to the ribosomes. In Methanoregula boonei (strain DSM 21154 / JCM 14090 / 6A8), this protein is Small ribosomal subunit protein uS10.